The following is a 397-amino-acid chain: Endoglucanase (397 aa).

E194 functions as the Proton donor in the catalytic mechanism. E317 acts as the Nucleophile in catalysis.

Belongs to the glycosyl hydrolase 5 (cellulase A) family.

It catalyses the reaction Endohydrolysis of (1-&gt;4)-beta-D-glucosidic linkages in cellulose, lichenin and cereal beta-D-glucans.. The sequence is that of Endoglucanase from Paenibacillus polymyxa (Bacillus polymyxa).